We begin with the raw amino-acid sequence, 234 residues long: Large ribosomal subunit protein uL1 (234 aa).

The protein belongs to the universal ribosomal protein uL1 family. As to quaternary structure, part of the 50S ribosomal subunit.

Its function is as follows. Binds directly to 23S rRNA. The L1 stalk is quite mobile in the ribosome, and is involved in E site tRNA release. Functionally, protein L1 is also a translational repressor protein, it controls the translation of the L11 operon by binding to its mRNA. The chain is Large ribosomal subunit protein uL1 from Corynebacterium aurimucosum (strain ATCC 700975 / DSM 44827 / CIP 107346 / CN-1) (Corynebacterium nigricans).